The sequence spans 352 residues: MDYQVSSPTYDIDYYTSEPCQKVNVKQIAARLLPPLYSLVFIFGFVGNILVVLILINCKRLKSMTDIYLLNLAISDLFFLLTVPFWAHYAAAQWDFGNTMCQLLTGLYFIGFFSGIFFIILLTIDRYLAIVHAVFALKARTVTFGVVTSVITWVVAVFASLPGIIFTRSQREGLHYTCSSHFPYSQYQFWKNFQTLKIVILGLVLPLLVMVICYSGILKTLLRCRNEKKRHRAVRLIFTIMIVYFLFWAPYNIVLLLNTFQEFFGLNNCSSSNRLDQAMQVTETLGMTHCCINPIIYAFVGEKFRNYLLVFFQKHIAKRFCKCCSIFQQEAPERASSVYTRSTGEQETSVGL.

The Extracellular portion of the chain corresponds to 1 to 30; it reads MDYQVSSPTYDIDYYTSEPCQKVNVKQIAA. Position 3 is a sulfotyrosine (tyrosine 3). Residues serine 6 and serine 7 are each glycosylated (O-linked (GalNAc...) serine). Residues tyrosine 10, tyrosine 14, and tyrosine 15 each carry the sulfotyrosine modification. 2 disulfide bridges follow: cysteine 20–cysteine 269 and cysteine 101–cysteine 178. Residues 31–58 form a helical membrane-spanning segment; it reads RLLPPLYSLVFIFGFVGNILVVLILINC. Residues 59 to 68 are Cytoplasmic-facing; it reads KRLKSMTDIY. Residues 69–89 form a helical membrane-spanning segment; it reads LLNLAISDLFFLLTVPFWAHY. The Extracellular segment spans residues 90-102; the sequence is AAAQWDFGNTMCQ. The chain crosses the membrane as a helical span at residues 103 to 124; it reads LLTGLYFIGFFSGIFFIILLTI. Residues 125–141 lie on the Cytoplasmic side of the membrane; sequence DRYLAIVHAVFALKART. A helical membrane pass occupies residues 142 to 166; that stretch reads VTFGVVTSVITWVVAVFASLPGIIF. Topologically, residues 167–198 are extracellular; sequence TRSQREGLHYTCSSHFPYSQYQFWKNFQTLKI. A helical membrane pass occupies residues 199-218; the sequence is VILGLVLPLLVMVICYSGIL. The Cytoplasmic segment spans residues 219–235; the sequence is KTLLRCRNEKKRHRAVR. Residues 236–260 form a helical membrane-spanning segment; the sequence is LIFTIMIVYFLFWAPYNIVLLLNTF. Residues 261–277 lie on the Extracellular side of the membrane; that stretch reads QEFFGLNNCSSSNRLDQ. A helical membrane pass occupies residues 278–301; the sequence is AMQVTETLGMTHCCINPIIYAFVG. The Cytoplasmic portion of the chain corresponds to 302 to 352; it reads EKFRNYLLVFFQKHIAKRFCKCCSIFQQEAPERASSVYTRSTGEQETSVGL. S-palmitoyl cysteine attachment occurs at residues cysteine 321, cysteine 323, and cysteine 324. 4 positions are modified to phosphoserine; by BARK1: serine 336, serine 337, serine 342, and serine 349.

Belongs to the G-protein coupled receptor 1 family. As to quaternary structure, interacts with PRAF2. Efficient ligand binding to CCL3/MIP-1alpha and CCL4/MIP-1beta requires sulfation, O-glycosylation and sialic acid modifications. Glycosylation on Ser-6 is required for efficient binding of CCL4. Interacts with GRK2. Interacts with ARRB1 and ARRB2. Interacts with CNIH4. Interacts with S100A4; this interaction stimulates T-lymphocyte chemotaxis. Post-translationally, sulfated on at least 2 of the N-terminal tyrosines. Sulfation is required for efficient binding of the chemokines, CCL3 and CCL4. In terms of processing, palmitoylation in the C-terminal is important for cell surface expression. Phosphorylation on serine residues in the C-terminal is stimulated by binding CC chemokines especially by APO-RANTES. Post-translationally, O-glycosylated, but not N-glycosylated. Ser-6 appears to be the major site even if Ser-7 may be also O-glycosylated. Also sialylated glycans present which contribute to chemokine binding. Thr-16 and Ser-17 may also be glycosylated and, if so, with small moieties such as a T-antigen.

The protein resides in the cell membrane. Its function is as follows. Receptor for a number of inflammatory CC-chemokines including CCL3/MIP-1-alpha, CCL4/MIP-1-beta and RANTES and subsequently transduces a signal by increasing the intracellular calcium ion level. May play a role in the control of granulocytic lineage proliferation or differentiation. Participates in T-lymphocyte migration to the infection site by acting as a chemotactic receptor. The polypeptide is C-C chemokine receptor type 5 (CCR5) (Trachypithecus francoisi (Francois' leaf monkey)).